The primary structure comprises 113 residues: Death-associated protein-like 1.S (113 aa).

Residues 1–53 (MTKELKVQSSPQALKAGHLPAVKAGGMRVSKKQGNDENSAPEKNAKKTLQEKP) form a disordered region.

Belongs to the DAP-DAPL1 family. As to quaternary structure, associates with ribosomes; preventing translation. Interacts with eiF5a (eif5a and eif5a2); preventing translation.

In terms of biological role, ribosome-binding protein that promotes ribosome hibernation, a process during which ribosomes are stabilized in an inactive state and preserved from proteasomal degradation. Acts via its association with eiF5a (eif5a and eif5a2) at the polypeptide exit tunnel of the ribosome, preventing mRNA translation. Plays a key role in ribosome hibernation in the mature egg by preventing mRNA translation, leading to ribosome inactivation. Ribosomes, which are produced in large quantities during oogenesis, are stored and translationally repressed in the egg and early embryo. The chain is Death-associated protein-like 1.S (dapl1.S) from Xenopus laevis (African clawed frog).